The following is a 367-amino-acid chain: Uroporphyrinogen decarboxylase (367 aa).

The residue at position 1 (Met-1) is an N-acetylmethionine. Coproporphyrinogen I is bound by residues Arg-37, Ala-39, Arg-41, Arg-50, Asp-86, Tyr-164, Ser-219, and His-339. Coproporphyrinogen III is bound by residues Arg-37, Ala-39, and Arg-41. The coproporphyrinogen III site is built by Asp-86, Tyr-164, Ser-219, and His-339.

Belongs to the uroporphyrinogen decarboxylase family. Homodimer.

It is found in the cytoplasm. The protein localises to the cytosol. It carries out the reaction uroporphyrinogen III + 4 H(+) = coproporphyrinogen III + 4 CO2. It catalyses the reaction uroporphyrinogen I + 4 H(+) = coproporphyrinogen I + 4 CO2. It participates in porphyrin-containing compound metabolism; protoporphyrin-IX biosynthesis; coproporphyrinogen-III from 5-aminolevulinate: step 4/4. In terms of biological role, catalyzes the sequential decarboxylation of the four acetate side chains of uroporphyrinogen to form coproporphyrinogen and participates in the fifth step in the heme biosynthetic pathway. Isomer I or isomer III of uroporphyrinogen may serve as substrate, but only coproporphyrinogen III can ultimately be converted to heme. In vitro also decarboxylates pentacarboxylate porphyrinogen I. The polypeptide is Uroporphyrinogen decarboxylase (Ovis aries (Sheep)).